We begin with the raw amino-acid sequence, 377 residues long: DNA replication and repair protein RecF (377 aa).

30-37 (GLNGSGKT) serves as a coordination point for ATP.

This sequence belongs to the RecF family.

The protein resides in the cytoplasm. The RecF protein is involved in DNA metabolism; it is required for DNA replication and normal SOS inducibility. RecF binds preferentially to single-stranded, linear DNA. It also seems to bind ATP. This chain is DNA replication and repair protein RecF, found in Cytophaga hutchinsonii (strain ATCC 33406 / DSM 1761 / CIP 103989 / NBRC 15051 / NCIMB 9469 / D465).